The following is a 486-amino-acid chain: V-type proton ATPase subunit B1 (486 aa).

At Gly-2 the chain carries N-acetylglycine.

Belongs to the ATPase alpha/beta chains family. As to quaternary structure, V-ATPase is a heteromultimeric enzyme composed of a peripheral catalytic V1 complex (components A to H) attached to an integral membrane V0 proton pore complex (components: a, c, c'', d and e).

The protein localises to the vacuole membrane. Non-catalytic subunit of the peripheral V1 complex of vacuolar ATPase. V-ATPase is responsible for acidifying a variety of intracellular compartments in eukaryotic cells. In Arabidopsis thaliana (Mouse-ear cress), this protein is V-type proton ATPase subunit B1 (VHA-B1).